We begin with the raw amino-acid sequence, 147 residues long: Hemoglobin subunit epsilon (147 aa).

The Globin domain occupies 3 to 147 (HFTAEEKSTI…VATALAHKYH (145 aa)). Phosphoserine is present on residues serine 14 and serine 51. Heme b contacts are provided by histidine 64 and histidine 93.

The protein belongs to the globin family. As to quaternary structure, heterotetramer of two alpha chains and two epsilon chains in early embryonic hemoglobin Gower-2; two zeta chains and two epsilon chains in early embryonic hemoglobin Gower-1. Red blood cells.

The epsilon chain is a beta-type chain of early mammalian embryonic hemoglobin. The polypeptide is Hemoglobin subunit epsilon (HBE1) (Microcebus murinus (Gray mouse lemur)).